A 246-amino-acid polypeptide reads, in one-letter code: 3-deoxy-manno-octulosonate cytidylyltransferase (246 aa).

The protein belongs to the KdsB family.

Its subcellular location is the cytoplasm. The catalysed reaction is 3-deoxy-alpha-D-manno-oct-2-ulosonate + CTP = CMP-3-deoxy-beta-D-manno-octulosonate + diphosphate. It functions in the pathway nucleotide-sugar biosynthesis; CMP-3-deoxy-D-manno-octulosonate biosynthesis; CMP-3-deoxy-D-manno-octulosonate from 3-deoxy-D-manno-octulosonate and CTP: step 1/1. It participates in bacterial outer membrane biogenesis; lipopolysaccharide biosynthesis. Its function is as follows. Activates KDO (a required 8-carbon sugar) for incorporation into bacterial lipopolysaccharide in Gram-negative bacteria. The sequence is that of 3-deoxy-manno-octulosonate cytidylyltransferase from Rickettsia peacockii (strain Rustic).